The chain runs to 377 residues: Succinyl-diaminopimelate desuccinylase (377 aa).

His-67 contributes to the Zn(2+) binding site. Asp-69 is a catalytic residue. Asp-100 is a binding site for Zn(2+). Glu-134 acts as the Proton acceptor in catalysis. The Zn(2+) site is built by Glu-135, Glu-163, and His-349.

Belongs to the peptidase M20A family. DapE subfamily. In terms of assembly, homodimer. The cofactor is Zn(2+). It depends on Co(2+) as a cofactor.

It carries out the reaction N-succinyl-(2S,6S)-2,6-diaminopimelate + H2O = (2S,6S)-2,6-diaminopimelate + succinate. Its pathway is amino-acid biosynthesis; L-lysine biosynthesis via DAP pathway; LL-2,6-diaminopimelate from (S)-tetrahydrodipicolinate (succinylase route): step 3/3. Catalyzes the hydrolysis of N-succinyl-L,L-diaminopimelic acid (SDAP), forming succinate and LL-2,6-diaminopimelate (DAP), an intermediate involved in the bacterial biosynthesis of lysine and meso-diaminopimelic acid, an essential component of bacterial cell walls. The protein is Succinyl-diaminopimelate desuccinylase of Buchnera aphidicola subsp. Baizongia pistaciae (strain Bp).